A 267-amino-acid polypeptide reads, in one-letter code: Apolipoprotein A-I (267 aa).

The first 18 residues, 1-18 (MKAAVLTLAVLFLTGSQA), serve as a signal peptide directing secretion. A run of 2 repeats spans residues 68–89 (LKLL…EQLG) and 90–111 (PVTQ…QEMS). The interval 68–267 (LKLLDNWDSM…EEYTKKLNTQ (200 aa)) is 10 X approximate tandem repeats. Met-110 carries the methionine sulfoxide modification. One copy of the 3; half-length repeat lies at 112-122 (KDLEEVKAKVQ). 5 repeat units span residues 123–144 (PYLD…QKVE), 145–166 (PLRA…EKLS), 167–188 (PLGE…THLA), 189–210 (PYTD…ENGG), and 211–232 (ARLA…EKAK). Met-136 is modified (methionine sulfoxide). The 9; half-length repeat unit spans residues 233 to 243 (PALEDLRQGLL). Residues 244-267 (PVLESFKVSFLSALEEYTKKLNTQ) form repeat 10.

This sequence belongs to the apolipoprotein A1/A4/E family. Homodimer. Interacts with APOA1BP and CLU. Component of a sperm activating protein complex (SPAP), consisting of APOA1, an immunoglobulin heavy chain, an immunoglobulin light chain and albumin. Interacts with NDRG1. Interacts with SCGB3A2. Interacts with NAXE and YJEFN3. Post-translationally, glycosylated. Palmitoylated. As to expression, major protein of plasma HDL, also found in chylomicrons.

It localises to the secreted. Its function is as follows. Participates in the reverse transport of cholesterol from tissues to the liver for excretion by promoting cholesterol efflux from tissues and by acting as a cofactor for the lecithin cholesterol acyltransferase (LCAT). As part of the SPAP complex, activates spermatozoa motility. The chain is Apolipoprotein A-I (APOA1) from Pongo abelii (Sumatran orangutan).